A 110-amino-acid polypeptide reads, in one-letter code: Mite allergen Lep d 5 (110 aa).

Belongs to the mite group 5 allergen family.

In Lepidoglyphus destructor (Storage mite), this protein is Mite allergen Lep d 5.